Consider the following 469-residue polypeptide: 3-isopropylmalate dehydratase large subunit (469 aa).

[4Fe-4S] cluster-binding residues include cysteine 349, cysteine 410, and cysteine 413.

It belongs to the aconitase/IPM isomerase family. LeuC type 1 subfamily. As to quaternary structure, heterodimer of LeuC and LeuD. [4Fe-4S] cluster serves as cofactor.

The catalysed reaction is (2R,3S)-3-isopropylmalate = (2S)-2-isopropylmalate. The protein operates within amino-acid biosynthesis; L-leucine biosynthesis; L-leucine from 3-methyl-2-oxobutanoate: step 2/4. Catalyzes the isomerization between 2-isopropylmalate and 3-isopropylmalate, via the formation of 2-isopropylmaleate. This is 3-isopropylmalate dehydratase large subunit from Neisseria meningitidis serogroup B (strain ATCC BAA-335 / MC58).